The sequence spans 548 residues: Internalin H (548 aa).

Residues methionine 1–glycine 30 form the signal peptide. LRR repeat units lie at residues glycine 93–leucine 105, leucine 113–leucine 127, valine 135–leucine 149, valine 157–leucine 171, isoleucine 179–isoleucine 193, leucine 201–alanine 215, and isoleucine 223–histidine 236. The tract at residues phenylalanine 480–alanine 518 is disordered. A compositionally biased stretch (low complexity) spans asparagine 483 to glycine 498. The span at serine 504–proline 516 shows a compositional bias: polar residues. The short motif at leucine 515 to glycine 519 is the LPXTG sorting signal element. At alanine 518 the chain carries Pentaglycyl murein peptidoglycan amidated alanine. The propeptide at glycine 519–lysine 548 is removed by sortase A.

Belongs to the internalin family.

It is found in the secreted. The protein resides in the cell wall. Contributes to systemic listeriosis in mice by decreasing host IL-6 cytokine production and thus evasion of the host immune response. Does not contribute to invasion of the host intestinal tissue. The polypeptide is Internalin H (inlH) (Listeria monocytogenes serovar 1/2a (strain ATCC BAA-679 / EGD-e)).